The sequence spans 249 residues: Type III pantothenate kinase (249 aa).

6–13 contacts ATP; that stretch reads DIGNSRTK. Substrate is bound by residues Y89 and 96–99; that span reads GIDR. Residue D98 is the Proton acceptor of the active site. D119 serves as a coordination point for K(+). T122 is an ATP binding site. Residue T174 participates in substrate binding.

Belongs to the type III pantothenate kinase family. In terms of assembly, homodimer. NH4(+) serves as cofactor. K(+) is required as a cofactor.

Its subcellular location is the cytoplasm. The enzyme catalyses (R)-pantothenate + ATP = (R)-4'-phosphopantothenate + ADP + H(+). It functions in the pathway cofactor biosynthesis; coenzyme A biosynthesis; CoA from (R)-pantothenate: step 1/5. Catalyzes the phosphorylation of pantothenate (Pan), the first step in CoA biosynthesis. This is Type III pantothenate kinase from Colwellia psychrerythraea (strain 34H / ATCC BAA-681) (Vibrio psychroerythus).